A 126-amino-acid polypeptide reads, in one-letter code: Acidic phospholipase A2 S1E6-a (126 aa).

A signal peptide spans 1–3; sequence VEG. Disulfide bonds link Cys29-Cys119, Cys31-Cys47, Cys46-Cys98, Cys52-Cys126, Cys53-Cys91, Cys60-Cys84, and Cys78-Cys89. Ca(2+) contacts are provided by Tyr30, Gly32, and Gly34. The active site involves His50. Asp51 contributes to the Ca(2+) binding site. Asp92 is an active-site residue.

In terms of assembly, homodimer. Requires Ca(2+) as cofactor. In terms of tissue distribution, expressed by the venom gland.

The protein localises to the secreted. It carries out the reaction a 1,2-diacyl-sn-glycero-3-phosphocholine + H2O = a 1-acyl-sn-glycero-3-phosphocholine + a fatty acid + H(+). Snake venom phospholipase A2 (PLA2) that inhibits ADP-induced platelet aggregation. PLA2 catalyzes the calcium-dependent hydrolysis of the 2-acyl groups in 3-sn-phosphoglycerides. The polypeptide is Acidic phospholipase A2 S1E6-a (Calloselasma rhodostoma (Malayan pit viper)).